Consider the following 321-residue polypeptide: Phosphatidate cytidylyltransferase, mitochondrial (321 aa).

Belongs to the TAM41 family. It depends on Mg(2+) as a cofactor. Co(2+) is required as a cofactor. The cofactor is Cu(2+).

The protein resides in the mitochondrion inner membrane. It carries out the reaction a 1,2-diacyl-sn-glycero-3-phosphate + CTP + H(+) = a CDP-1,2-diacyl-sn-glycerol + diphosphate. It participates in phospholipid metabolism; CDP-diacylglycerol biosynthesis; CDP-diacylglycerol from sn-glycerol 3-phosphate: step 3/3. Functionally, catalyzes the formation of CDP-diacylglycerol (CDP-DAG) from phosphatidic acid (PA) in the mitochondrial inner membrane. Required for the biosynthesis of the dimeric phospholipid cardiolipin, which stabilizes supercomplexes of the mitochondrial respiratory chain in the mitochondrial inner membrane. In Caenorhabditis briggsae, this protein is Phosphatidate cytidylyltransferase, mitochondrial.